Reading from the N-terminus, the 180-residue chain is Small ribosomal subunit protein uS4 (180 aa).

The 72-residue stretch at 103 to 174 (RRLQTLVFKK…HPERMVIEEV (72 aa)) folds into the S4 RNA-binding domain.

This sequence belongs to the universal ribosomal protein uS4 family. In terms of assembly, part of the 30S ribosomal subunit. Contacts protein S5. The interaction surface between S4 and S5 is involved in control of translational fidelity.

One of the primary rRNA binding proteins, it binds directly to 16S rRNA where it nucleates assembly of the body of the 30S subunit. Its function is as follows. With S5 and S12 plays an important role in translational accuracy. This chain is Small ribosomal subunit protein uS4, found in Thermococcus sibiricus (strain DSM 12597 / MM 739).